The sequence spans 149 residues: Large ribosomal subunit protein uL13 (149 aa).

It belongs to the universal ribosomal protein uL13 family. Part of the 50S ribosomal subunit.

In terms of biological role, this protein is one of the early assembly proteins of the 50S ribosomal subunit, although it is not seen to bind rRNA by itself. It is important during the early stages of 50S assembly. This is Large ribosomal subunit protein uL13 from Chlorobium limicola (strain DSM 245 / NBRC 103803 / 6330).